We begin with the raw amino-acid sequence, 119 residues long: DNA-binding protein MmarC7_1157 (119 aa).

The span at Met1–Gln12 shows a compositional bias: basic and acidic residues. Residues Met1–Gln37 are disordered.

This sequence belongs to the PDCD5 family.

The polypeptide is DNA-binding protein MmarC7_1157 (Methanococcus maripaludis (strain C7 / ATCC BAA-1331)).